The sequence spans 250 residues: Trypsin (250 aa).

A signal peptide spans 1–15; sequence MRLLALLLMVGAAVA. Residues 16 to 22 constitute a propeptide, activation peptide; the sequence is VPREDGR. In terms of domain architecture, Peptidase S1 spans 23–247; the sequence is IIGGHECAAH…FLGWIERTLE (225 aa). Intrachain disulfides connect Cys-29-Cys-163, Cys-47-Cys-63, Cys-133-Cys-236, Cys-140-Cys-209, Cys-174-Cys-188, and Cys-199-Cys-223. Catalysis depends on charge relay system residues His-62 and Asp-106. Ser-203 serves as the catalytic Charge relay system.

Belongs to the peptidase S1 family.

The protein localises to the secreted. The protein resides in the extracellular space. The enzyme catalyses Preferential cleavage: Arg-|-Xaa, Lys-|-Xaa.. This chain is Trypsin, found in Pleuronectes platessa (European plaice).